A 244-amino-acid polypeptide reads, in one-letter code: Heat shock transcription factor (244 aa).

A DNA-binding region spans residues 13 to 108; that stretch reads IPKFIMKLYK…LLGFDDSLRM (96 aa). The tract at residues 123–168 is involved in trimerization; that stretch reads DGSLKEIVEYLYVQNQELYTELSVCKERIERQERALNGLIEILSRV. Positions 204–244 are disordered; it reads EGCEPASPPLQDKGIPELSFKPGGIPHADSDTKDDNYDPFF. A compositionally biased stretch (basic and acidic residues) spans 231-244; the sequence is ADSDTKDDNYDPFF.

It belongs to the HSF family. Homotrimer. Homotrimerization increases the affinity of HSF1 to DNA.

Its subcellular location is the nucleus. In terms of biological role, DNA-binding transcription factor that specifically binds heat shock promoter elements (HSE) and activates transcription. In Encephalitozoon cuniculi (strain GB-M1) (Microsporidian parasite), this protein is Heat shock transcription factor.